A 434-amino-acid polypeptide reads, in one-letter code: MARRTDRAPLLDWAEGPGVSPAPETEQGERWAQGYGAAWERRPAGELTPLPQLEDDHIAAVFVVTFDPRSGNIVEWCRPHDIDLEGVEFKSMASGSHRVQSDFIYFRKGGFFGLACFANMPVESELERGARMKSVGVLSPSYTLLYRYMHFLENQVRHQLEIPGHYTPLEAFYEDKKGVLPVGPQTCQPALHWLPPVHKHLYPEMKITHPAGCMSQFIKFFGEQIFVLWKFALLRKRILIFSPPPVGVVCYRVYCCCCLANVTLPGIGATAPESKPFFYVNVADIQTLDGEGSYVACTTEKIFEQKQDLYDVYVDNQNVKTHREHLQPLLRVNSADKEKYQRLNDQRQLLMYSQEVDGDCGSCEEDLFILFFMEQNNRIFQTLLEVASSQDKTLTAEHARSMGLDPHGDRTFLMDLLEVYGFDLMLVIDNPCCP.

Positions 1 to 29 are disordered; it reads MARRTDRAPLLDWAEGPGVSPAPETEQGE. In terms of domain architecture, uDENN spans 1 to 168; that stretch reads MARRTDRAPL…QLEIPGHYTP (168 aa). Residues 194–341 enclose the cDENN domain; sequence LPPVHKHLYP…VNSADKEKYQ (148 aa). The 92-residue stretch at 343–434 folds into the dDENN domain; the sequence is LNDQRQLLMY…MLVIDNPCCP (92 aa).

It belongs to the DENND11 family.

Probable guanine nucleotide exchange factor (GEF). May promote the exchange of GDP to GTP, converting inactive GDP-bound small GTPases into their active GTP-bound form. The sequence is that of DENN domain-containing protein 11 (dennd11) from Xenopus laevis (African clawed frog).